A 204-amino-acid polypeptide reads, in one-letter code: Recombination protein RecR (204 aa).

The C4-type zinc-finger motif lies at 58–75; that stretch reads CSICQNVTDRGDDPCSIC. A Toprim domain is found at 83 to 181; it reads SKICVVESPP…EVTKIARGIP (99 aa).

Belongs to the RecR family.

May play a role in DNA repair. It seems to be involved in an RecBC-independent recombinational process of DNA repair. It may act with RecF and RecO. The chain is Recombination protein RecR from Chlorobium phaeobacteroides (strain BS1).